The following is a 132-amino-acid chain: ATP synthase epsilon chain (132 aa).

This sequence belongs to the ATPase epsilon chain family. F-type ATPases have 2 components, CF(1) - the catalytic core - and CF(0) - the membrane proton channel. CF(1) has five subunits: alpha(3), beta(3), gamma(1), delta(1), epsilon(1). CF(0) has three main subunits: a, b and c.

Its subcellular location is the cell membrane. Produces ATP from ADP in the presence of a proton gradient across the membrane. The polypeptide is ATP synthase epsilon chain (Brevibacillus brevis (strain 47 / JCM 6285 / NBRC 100599)).